The sequence spans 858 residues: Translation initiation factor IF-2 (858 aa).

A disordered region spans residues 49–271; the sequence is TTTVTHPKSQ…NKPAPVRKDK (223 aa). The segment covering 80-226 has biased composition (low complexity); sequence NQQQSNSRHQ…RFGGSLNSNN (147 aa). Positions 239–256 are enriched in basic residues; it reads NRRRNNRNNKSRNNKNQR. The 170-residue stretch at 359–528 folds into the tr-type G domain; sequence PRAPVVTVMG…LLQSEVLELT (170 aa). Positions 368 to 375 are G1; sequence GHVDHGKT. 368 to 375 is a GTP binding site; sequence GHVDHGKT. Residues 393–397 form a G2 region; that stretch reads GITQA. A G3 region spans residues 414 to 417; sequence DTPG. GTP contacts are provided by residues 414–418 and 468–471; these read DTPGH and NKID. The G4 stretch occupies residues 468–471; the sequence is NKID. The tract at residues 504-506 is G5; sequence SAK.

The protein belongs to the TRAFAC class translation factor GTPase superfamily. Classic translation factor GTPase family. IF-2 subfamily.

The protein resides in the cytoplasm. Its function is as follows. One of the essential components for the initiation of protein synthesis. Protects formylmethionyl-tRNA from spontaneous hydrolysis and promotes its binding to the 30S ribosomal subunits. Also involved in the hydrolysis of GTP during the formation of the 70S ribosomal complex. This is Translation initiation factor IF-2 from Lactiplantibacillus plantarum (strain ATCC BAA-793 / NCIMB 8826 / WCFS1) (Lactobacillus plantarum).